Reading from the N-terminus, the 134-residue chain is MTRPTSSAPSQRMLRVGEQVRAAITQVLQRGEVRDDIIEATVISISEVRMSPDLKIATAYVTPLGVSDHSIVIEALNRHAKFIRGRLGPQLRQMKYMPEVRFRDDTSFDNYKKIDELLRSPEVSRDLDGDNDDQ.

Belongs to the RbfA family. In terms of assembly, monomer. Binds 30S ribosomal subunits, but not 50S ribosomal subunits or 70S ribosomes.

It localises to the cytoplasm. In terms of biological role, one of several proteins that assist in the late maturation steps of the functional core of the 30S ribosomal subunit. Associates with free 30S ribosomal subunits (but not with 30S subunits that are part of 70S ribosomes or polysomes). Required for efficient processing of 16S rRNA. May interact with the 5'-terminal helix region of 16S rRNA. In Rhizobium etli (strain CIAT 652), this protein is Ribosome-binding factor A.